The following is a 1175-amino-acid chain: DNA-directed RNA polymerase subunit beta (1175 aa).

The tract at residues 12–33 (QSKTDRPQSSSNGSSSLNGSVP) is disordered. Residues 20 to 31 (SSSNGSSSLNGS) show a composition bias toward low complexity.

It belongs to the RNA polymerase beta chain family. In terms of assembly, the RNAP catalytic core consists of 2 alpha, 1 beta, 1 beta' and 1 omega subunit. When a sigma factor is associated with the core the holoenzyme is formed, which can initiate transcription.

It carries out the reaction RNA(n) + a ribonucleoside 5'-triphosphate = RNA(n+1) + diphosphate. In terms of biological role, DNA-dependent RNA polymerase catalyzes the transcription of DNA into RNA using the four ribonucleoside triphosphates as substrates. This Mycobacterium avium (strain 104) protein is DNA-directed RNA polymerase subunit beta.